A 496-amino-acid polypeptide reads, in one-letter code: Autophagy-related protein 21 (496 aa).

The disordered stretch occupies residues 41–86 (SKKKTSNNNGSASNSESRNNEESILITNGSRDRTDAEEEEDNEDNA). A compositionally biased stretch (low complexity) spans 46 to 57 (SNNNGSASNSES). A compositionally biased stretch (acidic residues) spans 75-84 (DAEEEEDNED). A Phosphothreonine modification is found at threonine 213. Residue serine 237 is modified to Phosphoserine. WD repeat units follow at residues 294–334 (VHKG…DYMS), 346–385 (TRLC…NSLP), and 448–488 (VNES…GECV). The short motif at 342–346 (FRRGT) is the L/FRRG motif element.

It belongs to the WD repeat PROPPIN family.

It is found in the cytoplasm. The protein localises to the vacuole. Functionally, required for cytoplasm to vacuole transport (Cvt) vesicles formation and mitophagy. Involved in binding of phosphatidylethanolamine to ATG8 and in recruitment of ATG8 and ATG5 to the pre-autophagosomal structure. Protects ATG8 from ARG4-mediated cleavage. Essential for maturation of proaminopeptidase I. The polypeptide is Autophagy-related protein 21 (ATG21) (Saccharomyces cerevisiae (strain ATCC 204508 / S288c) (Baker's yeast)).